A 432-amino-acid polypeptide reads, in one-letter code: Phosphomethylpyrimidine synthase (432 aa).

Residues asparagine 66, methionine 95, tyrosine 124, histidine 163, 185–187, 226–229, and glutamate 265 contribute to the substrate site; these read SRG and DGLR. Histidine 269 is a binding site for Zn(2+). Tyrosine 292 is a substrate binding site. Histidine 333 provides a ligand contact to Zn(2+). Residues cysteine 409, cysteine 412, and cysteine 416 each coordinate [4Fe-4S] cluster.

Belongs to the ThiC family. Requires [4Fe-4S] cluster as cofactor.

The enzyme catalyses 5-amino-1-(5-phospho-beta-D-ribosyl)imidazole + S-adenosyl-L-methionine = 4-amino-2-methyl-5-(phosphooxymethyl)pyrimidine + CO + 5'-deoxyadenosine + formate + L-methionine + 3 H(+). It participates in cofactor biosynthesis; thiamine diphosphate biosynthesis. Functionally, catalyzes the synthesis of the hydroxymethylpyrimidine phosphate (HMP-P) moiety of thiamine from aminoimidazole ribotide (AIR) in a radical S-adenosyl-L-methionine (SAM)-dependent reaction. The protein is Phosphomethylpyrimidine synthase of Caldanaerobacter subterraneus subsp. tengcongensis (strain DSM 15242 / JCM 11007 / NBRC 100824 / MB4) (Thermoanaerobacter tengcongensis).